Consider the following 180-residue polypeptide: ATP-dependent protease subunit HslV (180 aa).

Thr5 is a catalytic residue. 3 residues coordinate Na(+): Gly165, Cys168, and Thr171.

This sequence belongs to the peptidase T1B family. HslV subfamily. In terms of assembly, a double ring-shaped homohexamer of HslV is capped on each side by a ring-shaped HslU homohexamer. The assembly of the HslU/HslV complex is dependent on binding of ATP.

It localises to the cytoplasm. It catalyses the reaction ATP-dependent cleavage of peptide bonds with broad specificity.. Its activity is regulated as follows. Allosterically activated by HslU binding. Functionally, protease subunit of a proteasome-like degradation complex believed to be a general protein degrading machinery. This Helicobacter pylori (strain G27) protein is ATP-dependent protease subunit HslV.